The following is a 3218-amino-acid chain: Serine/threonine-protein kinase Smg1 (3218 aa).

The tract at residues 32 to 78 (LNNNGNHGDSSNEGGGGNGSGRGGATGSGNIAGLGGSESMWSPGGGK) is disordered. Over residues 33-43 (NNNGNHGDSSN) the composition is skewed to low complexity. A compositionally biased stretch (gly residues) spans 44 to 67 (EGGGGNGSGRGGATGSGNIAGLGG). Position 70 is a phosphoserine (Ser70). One can recognise an FAT domain in the interval 1289–1692 (DAAAAAREEG…IFPAVVGANR (404 aa)). The HEAT repeat unit spans residues 1643–1678 (APWKVIIPQLFSRLNHHEPYVRKSVCDLLCRLAKSR). The region spanning 1897–2232 (VESSVCVLPT…LGVGDLKYHK (336 aa)) is the PI3K/PI4K catalytic domain. Residues 1903-1909 (VLPTKTK) are G-loop. Residues 2101-2109 (GLGDRHLDN) form a catalytic loop region. Positions 2121 to 2145 (HIDYNVCFEKGRTLRIPEKVPFRLT) are activation loop. The 33-residue stretch at 3186 to 3218 (QRSTVAEQVDYVIREACNPENLAVLYEGWTPWV) folds into the FATC domain.

Belongs to the PI3/PI4-kinase family. In terms of assembly, component of a post-splicing multiprotein NMD complex. Requires Mn(2+) as cofactor.

The protein localises to the cytoplasm. It catalyses the reaction L-seryl-[protein] + ATP = O-phospho-L-seryl-[protein] + ADP + H(+). It carries out the reaction L-threonyl-[protein] + ATP = O-phospho-L-threonyl-[protein] + ADP + H(+). In terms of biological role, serine/threonine protein kinase involved in mRNA surveillance. Recognizes the substrate consensus sequence [ST]-Q. Involved in nonsense-mediated decay (NMD) of mRNAs containing premature stop codons, probably by phosphorylating Upf1. The chain is Serine/threonine-protein kinase Smg1 (nonC) from Drosophila melanogaster (Fruit fly).